The chain runs to 585 residues: Arginine--tRNA ligase (585 aa).

The 'HIGH' region signature appears at 126–136 (PNIAKEMHVGH).

It belongs to the class-I aminoacyl-tRNA synthetase family. In terms of assembly, monomer.

Its subcellular location is the cytoplasm. The enzyme catalyses tRNA(Arg) + L-arginine + ATP = L-arginyl-tRNA(Arg) + AMP + diphosphate. This Picosynechococcus sp. (strain ATCC 27264 / PCC 7002 / PR-6) (Agmenellum quadruplicatum) protein is Arginine--tRNA ligase.